The primary structure comprises 228 residues: L-ribulose-5-phosphate 4-epimerase UlaF (228 aa).

Residues 26–27 (GN), 43–44 (SG), and 72–73 (SS) each bind substrate. Zn(2+) contacts are provided by aspartate 74, histidine 93, and histidine 95. Catalysis depends on aspartate 118, which acts as the Proton donor/acceptor. Histidine 167 serves as a coordination point for Zn(2+). Tyrosine 225 functions as the Proton donor/acceptor in the catalytic mechanism.

The protein belongs to the aldolase class II family. AraD/FucA subfamily. Zn(2+) is required as a cofactor.

It carries out the reaction L-ribulose 5-phosphate = D-xylulose 5-phosphate. Its pathway is cofactor degradation; L-ascorbate degradation; D-xylulose 5-phosphate from L-ascorbate: step 4/4. Functionally, catalyzes the isomerization of L-ribulose 5-phosphate to D-xylulose 5-phosphate. Is involved in the anaerobic L-ascorbate utilization. This Escherichia coli O8 (strain IAI1) protein is L-ribulose-5-phosphate 4-epimerase UlaF.